A 437-amino-acid chain; its full sequence is Serine hydroxymethyltransferase (437 aa).

Residues Leu130 and 134–136 (GHL) each bind (6S)-5,6,7,8-tetrahydrofolate. An N6-(pyridoxal phosphate)lysine modification is found at Lys239. 363-365 (TPF) is a (6S)-5,6,7,8-tetrahydrofolate binding site.

This sequence belongs to the SHMT family. In terms of assembly, homodimer. Pyridoxal 5'-phosphate serves as cofactor.

Its subcellular location is the cytoplasm. It carries out the reaction (6R)-5,10-methylene-5,6,7,8-tetrahydrofolate + glycine + H2O = (6S)-5,6,7,8-tetrahydrofolate + L-serine. It functions in the pathway one-carbon metabolism; tetrahydrofolate interconversion. The protein operates within amino-acid biosynthesis; glycine biosynthesis; glycine from L-serine: step 1/1. In terms of biological role, catalyzes the reversible interconversion of serine and glycine with tetrahydrofolate (THF) serving as the one-carbon carrier. This reaction serves as the major source of one-carbon groups required for the biosynthesis of purines, thymidylate, methionine, and other important biomolecules. Also exhibits THF-independent aldolase activity toward beta-hydroxyamino acids, producing glycine and aldehydes, via a retro-aldol mechanism. The chain is Serine hydroxymethyltransferase from Bartonella henselae (strain ATCC 49882 / DSM 28221 / CCUG 30454 / Houston 1) (Rochalimaea henselae).